The following is a 697-amino-acid chain: Gametogenetin-binding protein 2 (697 aa).

Ser-360 carries the post-translational modification Phosphoserine.

As to quaternary structure, interacts with GGN. In terms of tissue distribution, expressed in heart, brain, placenta, lung, liver, skeletal muscle, kidney and pancreas. Expressed more abundantly in heart, pancreas and skeletal muscle.

The protein localises to the cytoplasmic vesicle. In terms of biological role, may be involved in spermatogenesis. This chain is Gametogenetin-binding protein 2 (GGNBP2), found in Homo sapiens (Human).